Consider the following 113-residue polypeptide: Prefoldin subunit beta (113 aa).

It belongs to the prefoldin subunit beta family. In terms of assembly, heterohexamer of two alpha and four beta subunits.

It is found in the cytoplasm. Molecular chaperone capable of stabilizing a range of proteins. Seems to fulfill an ATP-independent, HSP70-like function in archaeal de novo protein folding. The sequence is that of Prefoldin subunit beta from Methanococcus maripaludis (strain C7 / ATCC BAA-1331).